Reading from the N-terminus, the 185-residue chain is Ubiquitin-conjugating enzyme E2 2 (185 aa).

Residues 4–150 (PSKKRLIRDF…VKATVEASWL (147 aa)) form the UBC core domain. C88 serves as the catalytic Glycyl thioester intermediate. Over residues 149 to 173 (WLDDGEMPESIEEDDEAEAEAEAEA) the composition is skewed to acidic residues. Positions 149–185 (WLDDGEMPESIEEDDEAEAEAEAEATVDRSAPQTASA) are disordered.

It belongs to the ubiquitin-conjugating enzyme family.

The protein localises to the cytoplasm. The protein resides in the nucleus. The enzyme catalyses S-ubiquitinyl-[E1 ubiquitin-activating enzyme]-L-cysteine + [E2 ubiquitin-conjugating enzyme]-L-cysteine = [E1 ubiquitin-activating enzyme]-L-cysteine + S-ubiquitinyl-[E2 ubiquitin-conjugating enzyme]-L-cysteine.. It functions in the pathway protein modification; protein ubiquitination. Its function is as follows. Catalyzes the covalent attachment of ubiquitin to other proteins. Plays a role in transcription regulation by catalyzing the monoubiquitination of histone H2B to form H2BK123ub1. H2BK123ub1 gives a specific tag for epigenetic transcriptional activation and is also a prerequisite for H3K4me and H3K79me formation. Also involved in postreplication repair of UV-damaged DNA, in N-end rule-dependent protein degradation and in sporulation. This Mycosarcoma maydis (Corn smut fungus) protein is Ubiquitin-conjugating enzyme E2 2 (UBC2).